Consider the following 564-residue polypeptide: MAEARDLFKEFKVQSVSEFFRRNAAMLGYTGKIRSLTTIIHEAVTNSLDACEEAGILPYIRVEIEELGKEHYKVIVEDNGPGIPEEYIPHVFGKMLAGTKAHRNIQSRGQQGIGISGAVMFAQITSGKATRVITSTGGEIVEAWVKIDVQKNEGKIVKKLKHPNPKGWRGTRIELEVKDVKYVRSKQGVYWYLKLTAIANPHAHIELVEPDGKLVVFPRSSEDIPEPPVEMKPHPKGVMVDDVYTMAHRSKRSSVRRFLVSEFSRISDKKVDELIKYITALRLIKSETNKEVKEKLYEKLVSGDVDSVLRAFGRKWKKELEKVAKIMDKSPEKLTWHEAEEIVEAFKLMKFLAPPTHGLRPIGEENIKKGLTSILKPEFVTAVTRAPRVYAGGIPFQVEVGLAYGGQIQGSEILRYANRVPLLFDAGSCVITSAVRSIDWKRYKIDSFDSAPLVVLVNVVSVHVPYTSTGKQSIADIDEIHNEIRLALMDAARRLSFYLGGKFRRMYQVKRRKTLEKYLPEIARSLHILTGEPEEKIKEYFLKLIESKIEVEEVSEVEAEEAEA.

ATP contacts are provided by residues asparagine 46, aspartate 78, 99–100 (TK), 109–116 (GQQGIGIS), and lysine 471.

Belongs to the TOP6B family. In terms of assembly, homodimer. Heterotetramer of two Top6A and two Top6B chains.

It carries out the reaction ATP-dependent breakage, passage and rejoining of double-stranded DNA.. Relaxes both positive and negative superturns and exhibits a strong decatenase activity. This Pyrococcus abyssi (strain GE5 / Orsay) protein is Type 2 DNA topoisomerase 6 subunit B.